The chain runs to 728 residues: MNLQFRLYLLFILLFISFANGKNEYEDKSTSIIDLLSSKSQFSKLIRRLQRNRLVPYLNRNKGLTLFAPLNEAFPDDSIEPNLLYYIVNTTELDRSVLRTQLKSSDGQQIALKIHYKAETGRAYDKVNNAQIVQSNWRADSGVVQVIDNIIDLPPPALEILSSEKDFSIFHRLSVAWVGEYSSVTMLVPDSSAFLNVYTNTELAYLYSMYAAEDVKTLIHQHILVNQRVYAEDVIEPKTFHYKNGISISMKFDKDQKKLFINDVSTTKYDLLTFSGAIHTVSSLINPEIISFTPAKYLIGIGAAWFSEKLSRERKSISVDKTSKRAILAPTNWAYREIIDIDYHIIENFDLPAPNKYALYVTNIKSGNSVGEDTNALVRIATGSAGEMYVNVETRSIQSENIGNVSLYVLDKDIEPPQPLLSQLILVDEISFSVRYLASLGLGDYTKVTWFLVKNSAWTQLGLVHLVLQQNLELLESVMLDYAFEGIAFYGSSDEAWASGNYTTLSNKEFLIEGVYEDSNSRNKRDLLRINNEIYEVQTRDLLVKDGVVHLVDKVKLPFSVSQKDMIIAGGRKEFLELLDKFEMLDMLDSGYPVVVPSLTGSDVNTKDSSFAERHIIDPEKRNFVISGSRLSVDSSPWISIQDYGYSELGNVYFVQNAIPTKRQNRWRITFISISGLLLSVGICVLCYKIYFKFFRNRFMNQGEREPLLAPADSDTMAGRRNSSSLSV.

An N-terminal signal peptide occupies residues 1-21; it reads MNLQFRLYLLFILLFISFANG. The Vacuolar segment spans residues 22-670; it reads KNEYEDKSTS…TKRQNRWRIT (649 aa). 2 consecutive FAS1 domains span residues 29–151 and 154–285; these read STSI…DNII and PPPA…SSLI. Asparagine 89 is a glycosylation site (N-linked (GlcNAc...) asparagine). N-linked (GlcNAc...) asparagine glycosylation is found at asparagine 404 and asparagine 501. A helical transmembrane segment spans residues 671–691; sequence FISISGLLLSVGICVLCYKIY. Residues 692–728 are Cytoplasmic-facing; it reads FKFFRNRFMNQGEREPLLAPADSDTMAGRRNSSSLSV.

It localises to the vacuole membrane. Required for the fusion of autophagosomes with the vacuole. This chain is FAS1 domain-containing protein fsc1 (fsc1), found in Schizosaccharomyces pombe (strain 972 / ATCC 24843) (Fission yeast).